Reading from the N-terminus, the 188-residue chain is Peptide methionine sulfoxide reductase MsrA (188 aa).

The tract at residues 1 to 25 (MEGNEKAEQKNATSEESTDIFENPG) is disordered. Residue Cys-37 is part of the active site.

The protein belongs to the MsrA Met sulfoxide reductase family.

The catalysed reaction is L-methionyl-[protein] + [thioredoxin]-disulfide + H2O = L-methionyl-(S)-S-oxide-[protein] + [thioredoxin]-dithiol. It catalyses the reaction [thioredoxin]-disulfide + L-methionine + H2O = L-methionine (S)-S-oxide + [thioredoxin]-dithiol. Functionally, has an important function as a repair enzyme for proteins that have been inactivated by oxidation. Catalyzes the reversible oxidation-reduction of methionine sulfoxide in proteins to methionine. The sequence is that of Peptide methionine sulfoxide reductase MsrA from Methanosarcina acetivorans (strain ATCC 35395 / DSM 2834 / JCM 12185 / C2A).